The sequence spans 656 residues: Methionine--tRNA ligase (656 aa).

Positions 13–23 match the 'HIGH' region motif; it reads YYPSGNLHIGH. Positions 308-312 match the 'KMSKS' region motif; it reads KMSKS. Residue lysine 311 coordinates ATP. The region spanning 556–656 is the tRNA-binding domain; the sequence is DFDKVEIKAA…SAIPNGAVIK (101 aa).

This sequence belongs to the class-I aminoacyl-tRNA synthetase family. MetG type 2B subfamily. Homodimer.

The protein resides in the cytoplasm. It carries out the reaction tRNA(Met) + L-methionine + ATP = L-methionyl-tRNA(Met) + AMP + diphosphate. Is required not only for elongation of protein synthesis but also for the initiation of all mRNA translation through initiator tRNA(fMet) aminoacylation. In Staphylococcus epidermidis (strain ATCC 12228 / FDA PCI 1200), this protein is Methionine--tRNA ligase.